The following is a 309-amino-acid chain: Diadenylate cyclase (309 aa).

The 158-residue stretch at T144–P301 folds into the DAC domain.

The protein belongs to the adenylate cyclase family. DacZ subfamily. It depends on Mn(2+) as a cofactor.

It catalyses the reaction 2 ATP = 3',3'-c-di-AMP + 2 diphosphate. Its function is as follows. Diadenylate cyclase that catalyzes the condensation of 2 ATP molecules into cyclic di-AMP (c-di-AMP). c-di-AMP is a second messenger for intracellular signal transduction involved in the control of important regulatory processes such as osmoregulation. The sequence is that of Diadenylate cyclase from Methanocaldococcus jannaschii (strain ATCC 43067 / DSM 2661 / JAL-1 / JCM 10045 / NBRC 100440) (Methanococcus jannaschii).